A 1088-amino-acid chain; its full sequence is RNA-directed RNA polymerase (1088 aa).

Residues 501–687 (LSYGDVTRFL…AKRYIAGGKI (187 aa)) form the RdRp catalytic domain.

This sequence belongs to the reoviridae RNA-directed RNA polymerase family. In terms of assembly, interacts with VP3 (Potential). Interacts with VP2; this interaction activates VP1. Interacts with NSP5; this interaction is probably necessary for the formation of functional virus factories. Interacts with NSP2; this interaction is weak. It depends on Mg(2+) as a cofactor.

It is found in the virion. The enzyme catalyses RNA(n) + a ribonucleoside 5'-triphosphate = RNA(n+1) + diphosphate. Its function is as follows. RNA-directed RNA polymerase that is involved in both transcription and genome replication. Together with VP3 capping enzyme, forms an enzyme complex positioned near the channels situated at each of the five-fold vertices of the core. Following infection, the outermost layer of the virus is lost, leaving a double-layered particle (DLP) made up of the core and VP6 shell. VP1 then catalyzes the transcription of fully conservative plus-strand genomic RNAs that are extruded through the DLP's channels into the cytoplasm where they function as mRNAs for translation of viral proteins. One copy of each of the viral (+)RNAs is also recruited during core assembly, together with newly synthesized polymerase complexes and VP2. The polymerase of these novo-formed particles catalyzes the synthesis of complementary minus-strands leading to dsRNA formation. To do so, the polymerase specifically recognizes and binds 4 bases 5'-UGUG-3' in the conserved 3'-sequence of plus-strand RNA templates. VP2 presumably activates the autoinhibited VP1-RNA complex to coordinate packaging and genome replication. Once dsRNA synthesis is complete, the polymerase switches to the transcriptional mode, thus providing secondary transcription. This is RNA-directed RNA polymerase from Rotavirus A (strain RVA/Pig/United States/Gottfried/1983/G4P2B[6]) (RV-A).